The sequence spans 590 residues: O-fucosyltransferase 2 (590 aa).

Residues 1-16 show a composition bias toward basic and acidic residues; that stretch reads MGQERPNDEERPESRD. The tract at residues 1–26 is disordered; it reads MGQERPNDEERPESRDLGVYGCSPPH. Residues 67-87 form a helical; Signal-anchor for type II membrane protein membrane-spanning segment; sequence TAIGVMAILGFFCLVNWFMLS. N-linked (GlcNAc...) asparagine glycosylation is present at N125. Residue 365 to 367 coordinates substrate; the sequence is HLR. 2 N-linked (GlcNAc...) asparagine glycosylation sites follow: N485 and N546.

Belongs to the glycosyltransferase GT106 family.

Its subcellular location is the membrane. It functions in the pathway glycan metabolism. This Arabidopsis thaliana (Mouse-ear cress) protein is O-fucosyltransferase 2.